A 214-amino-acid polypeptide reads, in one-letter code: 14-3-3 protein homolog 2 (214 aa).

It belongs to the 14-3-3 family.

The polypeptide is 14-3-3 protein homolog 2 (Schistosoma mansoni (Blood fluke)).